Reading from the N-terminus, the 470-residue chain is MTELPDNTRWQLWIVAFGFFMQSLDTTIVNTALPSMAKSLGESPLHMHMVVVSYVLTVAVMLPASGWLADKIGVRNIFFAAIVLFTLGSLFCALSGTLNQLVLARVLQGVGGAMMVPVGRLTVMKIVPRAQYMAAMTFVTLPGQIGPLLGPALGGVLVEYASWHWIFLINIPVGIVGAMATFMLMPNYIIETRRFDLPGFLLLAIGMAVLTLALDGSKSMGISPWTLAGLAAGGAAAILLYLFHAKKNSGALFSLRLFRTPTFSLGLLGSFAGRIGSGMLPFMTPVFLQIGLGFSPFHAGLMMIPMVLGSMGMKRIVVQIVNRFGYRRVLVATTLGLALVSLLFMSVALLGWYYLLPLVLLLQGMVNSARFSSMNTLTLKDLPDTLASSGNSLLSMIMQLSMSIGVTIAGMLLGMFGQQHIGIDSSATHHVFMYTWLCMAVIIALPAIIFARVPNDTQQNMVISRRKRSL.

Residues 1–11 are Periplasmic-facing; the sequence is MTELPDNTRWQ. A helical membrane pass occupies residues 12-32; sequence LWIVAFGFFMQSLDTTIVNTA. Residues 33–48 are Cytoplasmic-facing; that stretch reads LPSMAKSLGESPLHMH. Residues 49 to 69 traverse the membrane as a helical segment; that stretch reads MVVVSYVLTVAVMLPASGWLA. The Periplasmic segment spans residues 70–76; the sequence is DKIGVRN. The chain crosses the membrane as a helical span at residues 77 to 97; it reads IFFAAIVLFTLGSLFCALSGT. At 98 to 101 the chain is on the cytoplasmic side; that stretch reads LNQL. A helical membrane pass occupies residues 102–124; the sequence is VLARVLQGVGGAMMVPVGRLTVM. Residues 125 to 137 lie on the Periplasmic side of the membrane; that stretch reads KIVPRAQYMAAMT. A helical membrane pass occupies residues 138–158; the sequence is FVTLPGQIGPLLGPALGGVLV. Residues 159 to 164 are Cytoplasmic-facing; that stretch reads EYASWH. Residues 165 to 185 form a helical membrane-spanning segment; sequence WIFLINIPVGIVGAMATFMLM. Residues 186 to 196 lie on the Periplasmic side of the membrane; it reads PNYIIETRRFD. Residues 197 to 217 traverse the membrane as a helical segment; it reads LPGFLLLAIGMAVLTLALDGS. At 218–224 the chain is on the cytoplasmic side; sequence KSMGISP. The chain crosses the membrane as a helical span at residues 225–245; that stretch reads WTLAGLAAGGAAAILLYLFHA. Residues 246–262 lie on the Periplasmic side of the membrane; it reads KKNSGALFSLRLFRTPT. The helical transmembrane segment at 263-283 threads the bilayer; sequence FSLGLLGSFAGRIGSGMLPFM. Residues 284–285 lie on the Cytoplasmic side of the membrane; sequence TP. Residues 286-306 form a helical membrane-spanning segment; that stretch reads VFLQIGLGFSPFHAGLMMIPM. Residues 307–341 lie on the Periplasmic side of the membrane; the sequence is VLGSMGMKRIVVQIVNRFGYRRVLVATTLGLALVS. The helical transmembrane segment at 342-362 threads the bilayer; that stretch reads LLFMSVALLGWYYLLPLVLLL. Over 363-395 the chain is Cytoplasmic; the sequence is QGMVNSARFSSMNTLTLKDLPDTLASSGNSLLS. A helical transmembrane segment spans residues 396–416; sequence MIMQLSMSIGVTIAGMLLGMF. Residues 417-430 are Periplasmic-facing; it reads GQQHIGIDSSATHH. Residues 431–451 form a helical membrane-spanning segment; that stretch reads VFMYTWLCMAVIIALPAIIFA. Topologically, residues 452-470 are cytoplasmic; that stretch reads RVPNDTQQNMVISRRKRSL.

Belongs to the major facilitator superfamily. TCR/Tet family.

It is found in the cell inner membrane. This chain is Putative multidrug resistance protein MdtD, found in Salmonella typhimurium (strain LT2 / SGSC1412 / ATCC 700720).